A 382-amino-acid polypeptide reads, in one-letter code: 2-heptyl-3-hydroxy-4(1H)-quinolone synthase (382 aa).

The protein belongs to the 3-hydroxybenzoate 6-hydroxylase family.

It catalyses the reaction 2-heptyl-4(1H)-quinolone + NADH + O2 + H(+) = 2-heptyl-3-hydroxy-4(1H)-quinolone + NAD(+) + H2O. Its function is as follows. Involved in the terminal step of the biosynthesis of quinolone which in addition to serve as a potent signal for quorum sensing, chelates iron and promotes the formation of membrane vesicles (MVs). Catalyzes the hydroxylation of 2-heptyl-4-quinolone (C7-HHQ) to yield 2-heptyl-3-hydroxy-4-quinolone (PQS). PqsH is also able to hydroxylate HHQ analogs having alkyl side-chain lengths of 3 (C3-HHQ), 5 (C5-HHQ) and 9 (C9-HHQ) carbons, however catalytic efficiencies are significantly reduced for substrates with alkyl side-chain lengths below 7 carbons. The polypeptide is 2-heptyl-3-hydroxy-4(1H)-quinolone synthase (pqsH) (Pseudomonas aeruginosa (strain UCBPP-PA14)).